The chain runs to 477 residues: MKKVEFFMLLLCFIAASSLVSADPPTCPADLGGKCSDSDDWQGDFFPEIPKIKYEGPSSKNPLAYRWYNAEEEILGKKMKDWFRFSVAFWHTFRGTGGDPFGAATKYWPWEDGTNSVSMAKRRMRANFEFLKKLGVDWWCFHDRDIAPDGTTLEESNKNLDEVIELAKELQKGSKIKPLWGTAQLFLHPRYMHGGATSSEVGVYAYAAAQVKKAMEVTHYLGGENYVFWGGREGYQTLLNTDMGRELDHLARFFEAAVAYKKKIGFKGTLLIEPKPQEPTKHQYDWDAATAANFLRKYGLIDEFKLNIECNHATLSGHTCHHELETARINGLLGNIDANTGDAQTGWDTDQFLTDVGEATMVMMSVIKNGGIAPGGFNFDAKLRRESTDVEDLFIAHISGMDTMARGLRNAVKILEEGSLSELVRKRYATWDSELGKQIEEGKADFEYLEKKAKEFGEPKVSSAKQELAEMIFQSAM.

The active site involves H142. Mn(2+) is bound by residues E273, E309, H312, D337, D348, D350, and D380.

This sequence belongs to the xylose isomerase family. Requires Mn(2+) as cofactor.

The catalysed reaction is alpha-D-xylose = alpha-D-xylulofuranose. The chain is Xylose isomerase (XYLA) from Arabidopsis thaliana (Mouse-ear cress).